Consider the following 100-residue polypeptide: NADH-quinone oxidoreductase subunit K (100 aa).

The next 3 helical transmembrane spans lie at 4–24 (LQHGLILAAILFVLGLTGLLV), 28–48 (LLFMLISLEVMINAAALAFIV), and 60–80 (VMYILAISLAAAEASIGLALL).

It belongs to the complex I subunit 4L family. In terms of assembly, NDH-1 is composed of 13 different subunits. Subunits NuoA, H, J, K, L, M, N constitute the membrane sector of the complex.

Its subcellular location is the cell inner membrane. The enzyme catalyses a quinone + NADH + 5 H(+)(in) = a quinol + NAD(+) + 4 H(+)(out). Its function is as follows. NDH-1 shuttles electrons from NADH, via FMN and iron-sulfur (Fe-S) centers, to quinones in the respiratory chain. The immediate electron acceptor for the enzyme in this species is believed to be ubiquinone. Couples the redox reaction to proton translocation (for every two electrons transferred, four hydrogen ions are translocated across the cytoplasmic membrane), and thus conserves the redox energy in a proton gradient. The protein is NADH-quinone oxidoreductase subunit K of Serratia proteamaculans (strain 568).